The sequence spans 108 residues: Small ribosomal subunit protein bS16 (108 aa).

The tract at residues 82-108 (ESKFSKNTQTENKKPVSKKTTKKSKDN) is disordered. Positions 96–108 (PVSKKTTKKSKDN) are enriched in basic residues.

This sequence belongs to the bacterial ribosomal protein bS16 family.

The polypeptide is Small ribosomal subunit protein bS16 (Mycoplasma mycoides subsp. mycoides SC (strain CCUG 32753 / NCTC 10114 / PG1)).